The chain runs to 223 residues: Crossover junction endodeoxyribonuclease RuvC (223 aa).

Active-site residues include Asp-12, Glu-73, and Asp-146. Residues Asp-12, Glu-73, and Asp-146 each coordinate Mg(2+). The interval 182 to 223 is disordered; that stretch reads QGKLGKAKSTLNARNNAQVTGDAQVRAGHPSQFERPDRADPR. Over residues 190–202 the composition is skewed to polar residues; the sequence is STLNARNNAQVTG. Basic and acidic residues predominate over residues 213–223; sequence QFERPDRADPR.

The protein belongs to the RuvC family. As to quaternary structure, homodimer which binds Holliday junction (HJ) DNA. The HJ becomes 2-fold symmetrical on binding to RuvC with unstacked arms; it has a different conformation from HJ DNA in complex with RuvA. In the full resolvosome a probable DNA-RuvA(4)-RuvB(12)-RuvC(2) complex forms which resolves the HJ. Requires Mg(2+) as cofactor.

It is found in the cytoplasm. It carries out the reaction Endonucleolytic cleavage at a junction such as a reciprocal single-stranded crossover between two homologous DNA duplexes (Holliday junction).. Functionally, the RuvA-RuvB-RuvC complex processes Holliday junction (HJ) DNA during genetic recombination and DNA repair. Endonuclease that resolves HJ intermediates. Cleaves cruciform DNA by making single-stranded nicks across the HJ at symmetrical positions within the homologous arms, yielding a 5'-phosphate and a 3'-hydroxyl group; requires a central core of homology in the junction. The consensus cleavage sequence is 5'-(A/T)TT(C/G)-3'. Cleavage occurs on the 3'-side of the TT dinucleotide at the point of strand exchange. HJ branch migration catalyzed by RuvA-RuvB allows RuvC to scan DNA until it finds its consensus sequence, where it cleaves and resolves the cruciform DNA. The sequence is that of Crossover junction endodeoxyribonuclease RuvC from Corynebacterium efficiens (strain DSM 44549 / YS-314 / AJ 12310 / JCM 11189 / NBRC 100395).